Reading from the N-terminus, the 275-residue chain is Diaminopimelate epimerase (275 aa).

3 residues coordinate substrate: Asn-13, Gln-46, and Asn-66. The active-site Proton donor is the Cys-75. Substrate-binding positions include 76 to 77 (GN), Asn-159, Asn-192, and 210 to 211 (ER). The active-site Proton acceptor is the Cys-219. 220–221 (GS) provides a ligand contact to substrate.

The protein belongs to the diaminopimelate epimerase family. Homodimer.

It is found in the cytoplasm. It carries out the reaction (2S,6S)-2,6-diaminopimelate = meso-2,6-diaminopimelate. The protein operates within amino-acid biosynthesis; L-lysine biosynthesis via DAP pathway; DL-2,6-diaminopimelate from LL-2,6-diaminopimelate: step 1/1. Its function is as follows. Catalyzes the stereoinversion of LL-2,6-diaminopimelate (L,L-DAP) to meso-diaminopimelate (meso-DAP), a precursor of L-lysine and an essential component of the bacterial peptidoglycan. This is Diaminopimelate epimerase from Idiomarina loihiensis (strain ATCC BAA-735 / DSM 15497 / L2-TR).